A 77-amino-acid polypeptide reads, in one-letter code: Acyl carrier protein (77 aa).

Positions 1 to 76 (MADFEKVKSI…DVTKFIDNLK (76 aa)) constitute a Carrier domain. Serine 36 bears the O-(pantetheine 4'-phosphoryl)serine mark.

The protein belongs to the acyl carrier protein (ACP) family. In terms of processing, 4'-phosphopantetheine is transferred from CoA to a specific serine of apo-ACP by AcpS. This modification is essential for activity because fatty acids are bound in thioester linkage to the sulfhydryl of the prosthetic group.

The protein resides in the cytoplasm. The protein operates within lipid metabolism; fatty acid biosynthesis. Functionally, carrier of the growing fatty acid chain in fatty acid biosynthesis. The protein is Acyl carrier protein of Leptospira borgpetersenii serovar Hardjo-bovis (strain JB197).